The primary structure comprises 418 residues: Protease LasA (418 aa).

A signal peptide spans 1–31 (MQHKRSRAMASPRSPFLFVLLALAVGGTANA). A propeptide spanning residues 32-236 (HDDGLPAFRY…ARQLQAKAAL (205 aa)) is cleaved from the precursor. Positions 259 and 272 each coordinate Zn(2+). Cysteines 301 and 347 form a disulfide. Active-site proton donor/acceptor residues include His317 and His356. Zn(2+) is bound at residue His358. A disulfide bridge links Cys391 with Cys406.

The protein belongs to the peptidase M23A family. It depends on Zn(2+) as a cofactor. Post-translationally, processing of pro-LasA can occur extracellularly and requires elastase (lasB). Secretion and processing may be linked.

Its subcellular location is the secreted. In terms of biological role, involved in proteolysis and elastolysis (degradation of the host protein elastin). Has staphylolytic activity (degrades pentaglycine cross-links in cell wall peptidoglycan), preferring Gly-Gly-|-X substrates where X is Ala or Gly. Enhances the elastolytic but not proteolytic activity of elastase (lasB) and elastolytic activity of other proteases. Degradation of host elastin is likely to contribute to the pathogenicity of P.aeruginosa. While either His-317 or His-356 can abstract a proton in the hydrolysis reaction, the same residue performs both functions in a given catalytic cycle, with the other stabilizing the catalytic intermediate. This Pseudomonas aeruginosa (strain ATCC 15692 / DSM 22644 / CIP 104116 / JCM 14847 / LMG 12228 / 1C / PRS 101 / PAO1) protein is Protease LasA (lasA).